A 266-amino-acid chain; its full sequence is Undecaprenyl-diphosphatase (266 aa).

The next 7 helical transmembrane spans lie at 41 to 61 (NLAF…VILW), 82 to 102 (YVIN…FFKD), 106 to 126 (AIFG…AALL), 140 to 160 (ISMK…LPGL), 180 to 200 (LAQF…LLDG), 213 to 233 (IPTL…CLAC), and 245 to 265 (LIYF…VSQL).

Belongs to the UppP family.

The protein localises to the cell inner membrane. The enzyme catalyses di-trans,octa-cis-undecaprenyl diphosphate + H2O = di-trans,octa-cis-undecaprenyl phosphate + phosphate + H(+). In terms of biological role, catalyzes the dephosphorylation of undecaprenyl diphosphate (UPP). Confers resistance to bacitracin. The polypeptide is Undecaprenyl-diphosphatase (Bacteroides fragilis (strain ATCC 25285 / DSM 2151 / CCUG 4856 / JCM 11019 / LMG 10263 / NCTC 9343 / Onslow / VPI 2553 / EN-2)).